Reading from the N-terminus, the 205-residue chain is GTP cyclohydrolase-2 (205 aa).

49-53 (RLHSE) contributes to the GTP binding site. Zn(2+)-binding residues include Cys-54, Cys-65, and Cys-67. GTP is bound by residues Gln-70, 92 to 94 (EGR), and Thr-114. Catalysis depends on Asp-126, which acts as the Proton acceptor. The Nucleophile role is filled by Arg-128. Thr-149 and Lys-154 together coordinate GTP.

This sequence belongs to the GTP cyclohydrolase II family. It depends on Zn(2+) as a cofactor.

The enzyme catalyses GTP + 4 H2O = 2,5-diamino-6-hydroxy-4-(5-phosphoribosylamino)-pyrimidine + formate + 2 phosphate + 3 H(+). Its pathway is cofactor biosynthesis; riboflavin biosynthesis; 5-amino-6-(D-ribitylamino)uracil from GTP: step 1/4. Its function is as follows. Catalyzes the conversion of GTP to 2,5-diamino-6-ribosylamino-4(3H)-pyrimidinone 5'-phosphate (DARP), formate and pyrophosphate. This chain is GTP cyclohydrolase-2, found in Pseudomonas putida (strain W619).